A 465-amino-acid polypeptide reads, in one-letter code: Mothers against decapentaplegic homolog 1 (465 aa).

Position 1 is an N-acetylmethionine (M1). The MH1 domain occupies 12–136 (PAVKRLLGWK…YKRVESPVLP (125 aa)). 4 residues coordinate Zn(2+): C64, C109, C121, and H126. Residues 162–248 (NEPHMPLNAT…SQPMDTNMMA (87 aa)) are disordered. Over residues 179-210 (PNSHPFPHSPNSSYPNSPGSSSSTYPHSPTSS) the composition is skewed to low complexity. Pro residues predominate over residues 221–232 (DTPPPAYLPPED). In terms of domain architecture, MH2 spans 271 to 465 (WCSIVYYELN…SPHNPISSVS (195 aa)). A Phosphothreonine; by MINK1, TNIK and MAP4K4 modification is found at T322. The tract at residues 418-428 (KGWGAEYHRQD) is L3 loop. Phosphoserine occurs at positions 463 and 465.

It belongs to the dwarfin/SMAD family. In terms of assembly, found in a complex with SMAD4 and YY1. Interacts with HGS, NANOG and ZCCHC12. Upon C-terminus phosphorylation: forms trimers with another SMAD1 and the co-SMAD SMAD4. Interacts with PEBP2-alpha subunit, CREB-binding protein (CBP), p300, SMURF1, SMURF2, USP15 and HOXC8. Associates with ZNF423 or ZNF521 in response to BMP2 leading to activate transcription of BMP target genes. Interacts with SKOR1. Interacts (via MH2 domain) with LEMD3. Binding to LEMD3 results in at least a partial reduction of receptor-mediated phosphorylation. Forms a ternary complex with PSMB4 and OAZ1 before PSMB4 is incorporated into the 20S proteasome. Interacts (via MH2 domain) with FAM83G (via MH2 domain); in a SMAD4-independent manner. Interacts with ZC3H3. Interacts with TMEM119. Interacts (via MH1 and MH2 domains) with ZNF8. Interacts with RANBP3L; the interaction increases when SMAD1 is not phosphorylated and mediates SMAD1 nuclear export. Interacts with EGR1; this interaction inhibits SMAD1 dephosphorylation. Interacts with SMAD6. Interacts with YAP1. Interacts with MTMR4; negatively regulates BMP signaling through SMAD1 dephosphorylation and retention in endosomes. In terms of processing, phosphorylation of the C-terminal SVS motif by BMP type 1 receptor kinase activates SMAD1 by promoting dissociation from the receptor and trimerization with SMAD4. Phosphorylation by ERK2 MAP kinase in response to EGF or HGF prevents SMAD1 nuclear accumulation and transcriptional activity in response to BMP. Dephosphorylation, probably by PPM1A, induces its export from the nucleus to the cytoplasm. Dephosphorylation is inhibited by association with EGR1. Phosphorylation by CDK8/9 creates binding sites for YAP1, and subsequent phosphorylation by GSK3 switches off YAP1 binding and adds binding sites for SMURF1. Post-translationally, ubiquitinated by SMAD-specific E3 ubiquitin ligase SMURF1, leading to its degradation. Monoubiquitinated, leading to prevent DNA-binding. Deubiquitination by USP15 alleviates inhibition and promotes activation of TGF-beta target genes. Dephosphorylation, probably by PPM1A, induces its export from the nucleus to the cytoplasm. Phospho-SMAD1 is ubiquitinated by CHIP leading to disruption of the SMAD1-SMAD4 complex. As to expression, ubiquitous. Highest expression seen in the heart and skeletal muscle.

The protein resides in the cytoplasm. Its subcellular location is the nucleus. Transcriptional modulator that plays a role in various cellular processes, including embryonic development, cell differentiation, and tissue homeostasis. Upon BMP ligand binding to their receptors at the cell surface, is phosphorylated by activated type I BMP receptors (BMPRIs) and associates with SMAD4 to form a heteromeric complex which translocates into the nucleus acting as transcription factor. In turn, the hetero-trimeric complex recognizes cis-regulatory elements containing Smad Binding Elements (SBEs) to modulate the outcome of the signaling network. SMAD1/OAZ1/PSMB4 complex mediates the degradation of the CREBBP/EP300 repressor SNIP1. Positively regulates BMP4-induced expression of odontogenic development regulator MSX1 following IPO7-mediated nuclear import. The chain is Mothers against decapentaplegic homolog 1 (SMAD1) from Homo sapiens (Human).